An 875-amino-acid polypeptide reads, in one-letter code: Translation initiation factor IF-2 (875 aa).

2 disordered regions span residues 123–204 (EKEK…EKPK) and 240–278 (ETKE…PVET). Positions 240 to 252 (ETKEEKAELEALR) are enriched in basic and acidic residues. Basic residues predominate over residues 259-268 (PKKKKKKKKK). Residues 269–278 (KEEEKAPVET) are compositionally biased toward basic and acidic residues. The tr-type G domain maps to 379–547 (ERPPVVTVMG…NILLVSEILE (169 aa)). Residues 388–395 (GHVDHGKT) form a G1 region. Residue 388–395 (GHVDHGKT) coordinates GTP. The segment at 413-417 (GITQH) is G2. The interval 435–438 (DTPG) is G3. Residues 435–439 (DTPGH) and 489–492 (NKID) contribute to the GTP site. Residues 489-492 (NKID) are G4. The interval 525-527 (SAK) is G5.

This sequence belongs to the TRAFAC class translation factor GTPase superfamily. Classic translation factor GTPase family. IF-2 subfamily.

The protein resides in the cytoplasm. Its function is as follows. One of the essential components for the initiation of protein synthesis. Protects formylmethionyl-tRNA from spontaneous hydrolysis and promotes its binding to the 30S ribosomal subunits. Also involved in the hydrolysis of GTP during the formation of the 70S ribosomal complex. The polypeptide is Translation initiation factor IF-2 (Persephonella marina (strain DSM 14350 / EX-H1)).